A 410-amino-acid polypeptide reads, in one-letter code: Tryptophan synthase beta chain (410 aa).

Lys-100 carries the post-translational modification N6-(pyridoxal phosphate)lysine.

Belongs to the TrpB family. Tetramer of two alpha and two beta chains. Pyridoxal 5'-phosphate serves as cofactor.

It catalyses the reaction (1S,2R)-1-C-(indol-3-yl)glycerol 3-phosphate + L-serine = D-glyceraldehyde 3-phosphate + L-tryptophan + H2O. The protein operates within amino-acid biosynthesis; L-tryptophan biosynthesis; L-tryptophan from chorismate: step 5/5. The beta subunit is responsible for the synthesis of L-tryptophan from indole and L-serine. This chain is Tryptophan synthase beta chain, found in Pyrobaculum aerophilum (strain ATCC 51768 / DSM 7523 / JCM 9630 / CIP 104966 / NBRC 100827 / IM2).